The sequence spans 480 residues: Protein nucleotidyltransferase YdiU (480 aa).

8 residues coordinate ATP: glycine 86, glycine 88, arginine 89, lysine 109, aspartate 121, glycine 122, arginine 172, and arginine 179. Catalysis depends on aspartate 248, which acts as the Proton acceptor. Positions 249 and 258 each coordinate Mg(2+). ATP is bound at residue aspartate 258.

It belongs to the SELO family. It depends on Mg(2+) as a cofactor. Mn(2+) is required as a cofactor.

The enzyme catalyses L-seryl-[protein] + ATP = 3-O-(5'-adenylyl)-L-seryl-[protein] + diphosphate. It catalyses the reaction L-threonyl-[protein] + ATP = 3-O-(5'-adenylyl)-L-threonyl-[protein] + diphosphate. The catalysed reaction is L-tyrosyl-[protein] + ATP = O-(5'-adenylyl)-L-tyrosyl-[protein] + diphosphate. It carries out the reaction L-histidyl-[protein] + UTP = N(tele)-(5'-uridylyl)-L-histidyl-[protein] + diphosphate. The enzyme catalyses L-seryl-[protein] + UTP = O-(5'-uridylyl)-L-seryl-[protein] + diphosphate. It catalyses the reaction L-tyrosyl-[protein] + UTP = O-(5'-uridylyl)-L-tyrosyl-[protein] + diphosphate. Functionally, nucleotidyltransferase involved in the post-translational modification of proteins. It can catalyze the addition of adenosine monophosphate (AMP) or uridine monophosphate (UMP) to a protein, resulting in modifications known as AMPylation and UMPylation. The sequence is that of Protein nucleotidyltransferase YdiU from Salmonella enteritidis PT4 (strain P125109).